The primary structure comprises 352 residues: Endophilin-A1 (352 aa).

The tract at residues 1–21 is membrane-binding amphipathic helix; it reads MSVAGLKKQFHKATQKVSEKV. The interval 1–27 is disordered; the sequence is MSVAGLKKQFHKATQKVSEKVGGAEGT. Positions 1-125 are binds and tubulates liposomes; the sequence is MSVAGLKKQF…EVGEAMRELS (125 aa). The BAR domain maps to 18 to 249; that stretch reads SEKVGGAEGT…LEERIRQASS (232 aa). The segment at 60–87 is required for dimerization upon membrane association; it reads PNPASRAKLSMINTMSKIRGQEKGPGYP. Residues 181 to 248 are a coiled coil; sequence EELRQALEKF…RLEERIRQAS (68 aa). Basic and acidic residues predominate over residues 245–257; the sequence is RQASSQPRREYQP. The disordered stretch occupies residues 245–289; that stretch reads RQASSQPRREYQPKPRMSLEFPTGDSTQPNGGLSHTGTPKPSGVQ. S262 carries the phosphoserine modification. Over residues 268 to 283 the composition is skewed to polar residues; the sequence is GDSTQPNGGLSHTGTP. The region spanning 290–349 is the SH3 domain; that stretch reads MDQPCCRALYDFEPENEGELGFKEGDIITLTNQIDENWYEGMLHGHSGFFPINYVEILVA. At Y299 the chain carries Phosphotyrosine.

It belongs to the endophilin family. In terms of assembly, monomer; in cytoplasm. Homodimer; when associated with membranes. Interacts with OPHN1. Interacts with SYNJ1. Interacts with DNM1. Interacts with MAP4K3; the interaction appears to regulate MAP4K3-mediated JNK activation. Interacts with PDCD6IP. Interacts with ATXN2. Interacts with ADAM9 and ADAM15 cytoplasmic tails. Interacts with BIN2. Interacts with TMEM108. Interacts with ADGRB2. As to expression, brain, mostly in frontal cortex. Expressed at high level in fetal cerebellum.

Its subcellular location is the cytoplasm. The protein localises to the membrane. It localises to the early endosome. The protein resides in the presynapse. Implicated in synaptic vesicle endocytosis. May recruit other proteins to membranes with high curvature. Required for BDNF-dependent dendrite outgrowth. Cooperates with SH3GL2 to mediate BDNF-NTRK2 early endocytic trafficking and signaling from early endosomes. The sequence is that of Endophilin-A1 (SH3GL2) from Homo sapiens (Human).